A 189-amino-acid polypeptide reads, in one-letter code: Elongation factor P (189 aa).

Residue K34 is modified to N6-(3,6-diaminohexanoyl)-5-hydroxylysine.

The protein belongs to the elongation factor P family. May be beta-lysylated on the epsilon-amino group of Lys-34 by the combined action of EpmA and EpmB, and then hydroxylated on the C5 position of the same residue by EpmC (if this protein is present). Lysylation is critical for the stimulatory effect of EF-P on peptide-bond formation. The lysylation moiety may extend toward the peptidyltransferase center and stabilize the terminal 3-CCA end of the tRNA. Hydroxylation of the C5 position on Lys-34 may allow additional potential stabilizing hydrogen-bond interactions with the P-tRNA.

It is found in the cytoplasm. Its pathway is protein biosynthesis; polypeptide chain elongation. Its function is as follows. Involved in peptide bond synthesis. Alleviates ribosome stalling that occurs when 3 or more consecutive Pro residues or the sequence PPG is present in a protein, possibly by augmenting the peptidyl transferase activity of the ribosome. Modification of Lys-34 is required for alleviation. The chain is Elongation factor P from Legionella pneumophila (strain Lens).